A 676-amino-acid polypeptide reads, in one-letter code: RNA helicase NPH-II (676 aa).

The 176-residue stretch at 172-347 (FSAWISHRPV…VFLPNPAFIH (176 aa)) folds into the Helicase ATP-binding domain. An ATP-binding site is contributed by 185-192 (GGTGVGKT). The DEXH box signature appears at 296–299 (DEVH). Residues 366–535 (NPSSRMAYIE…NYILYANKFN (170 aa)) enclose the Helicase C-terminal domain.

This sequence belongs to the DEAD box helicase family. DEAH subfamily. Monomer.

It localises to the virion. It carries out the reaction ATP + H2O = ADP + phosphate + H(+). NTP-dependent helicase that catalyzes unidirectional unwinding of 3'tailed duplex RNAs and plays an important role during transcription of early mRNAs, presumably by preventing R-loop formation behind the elongating RNA polymerase. Might also play a role in the export of newly synthesized mRNA chains out of the core into the cytoplasm. Required for replication and propagation of viral particles. The polypeptide is RNA helicase NPH-II (OPG084) (Homo sapiens (Human)).